Here is an 826-residue protein sequence, read N- to C-terminus: Zinc phosphodiesterase ELAC protein 2 (826 aa).

Residues 1-16 (MWALCSLLRSAAGRTM) constitute a mitochondrion transit peptide. Disordered regions lie at residues 16-51 (MSQG…PSGC) and 188-231 (EQRR…VSQR). The span at 27 to 38 (ARRERPRKDPLR) shows a compositional bias: basic and acidic residues. A phosphoserine mark is found at S199, S208, S212, S229, S618, and S736. A compositionally biased stretch (basic and acidic residues) spans 208–224 (SPERSSDSESNENEPHL). The segment at 798–826 (ELAGGLEDGEPQQKRAHTEEPQAKKVRAQ) is disordered. Residues 808-820 (PQQKRAHTEEPQA) are compositionally biased toward basic and acidic residues.

Belongs to the RNase Z family. As to quaternary structure, homodimer. Interacts with PTCD1. Zn(2+) serves as cofactor. As to expression, widely expressed. Highly expressed in heart, placenta, liver, skeletal muscle, kidney, pancreas, testis and ovary. Weakly expressed in brain, lung, spleen, thymus, prostate, small intestine, colon and leukocytes.

Its subcellular location is the mitochondrion. It is found in the mitochondrion matrix. It localises to the mitochondrion nucleoid. The protein localises to the nucleus. It carries out the reaction Endonucleolytic cleavage of RNA, removing extra 3' nucleotides from tRNA precursor, generating 3' termini of tRNAs. A 3'-hydroxy group is left at the tRNA terminus and a 5'-phosphoryl group is left at the trailer molecule.. Its function is as follows. Zinc phosphodiesterase, which displays mitochondrial tRNA 3'-processing endonuclease activity. Involved in tRNA maturation, by removing a 3'-trailer from precursor tRNA. Associates with mitochondrial DNA complexes at the nucleoids to initiate RNA processing and ribosome assembly. The chain is Zinc phosphodiesterase ELAC protein 2 (ELAC2) from Homo sapiens (Human).